A 192-amino-acid chain; its full sequence is Ion-translocating oxidoreductase complex subunit B (192 aa).

A hydrophobic region spans residues 1 to 26 (MSTIWIAIAALSALALAFGLVLGYAS). The 60-residue stretch at 32 to 91 (ENDPIVEEVEAMLPQSQCGQCGYPGCRPYAEAVALNGENINKCGPGGEAMMLKLAEKLNV) folds into the 4Fe-4S domain. The [4Fe-4S] cluster site is built by Cys-49, Cys-52, Cys-57, Cys-74, Cys-117, Cys-120, Cys-123, Cys-127, Cys-147, Cys-150, Cys-153, and Cys-157. 4Fe-4S ferredoxin-type domains follow at residues 108–137 (QVAW…GSTK) and 138–167 (AVHT…LRPI).

This sequence belongs to the 4Fe4S bacterial-type ferredoxin family. RnfB subfamily. The complex is composed of six subunits: RnfA, RnfB, RnfC, RnfD, RnfE and RnfG. [4Fe-4S] cluster is required as a cofactor.

It is found in the cell inner membrane. Part of a membrane-bound complex that couples electron transfer with translocation of ions across the membrane. This chain is Ion-translocating oxidoreductase complex subunit B, found in Pectobacterium carotovorum subsp. carotovorum (strain PC1).